The following is a 350-amino-acid chain: Trans-enoyl reductase iliB (350 aa).

50-53 (VDGK) provides a ligand contact to NADP(+). 145-152 (AAIATVGL) contacts substrate. NADP(+) is bound by residues 177-180 (SAAS), Tyr195, and 242-243 (LD). 262-266 (TPTQF) contributes to the substrate binding site. 331-332 (IK) contacts NADP(+).

Belongs to the zinc-containing alcohol dehydrogenase family. As to quaternary structure, monomer.

It catalyses the reaction N-[(4E,6E,10S,12Z,14E)-6,10-dimethyl-3-oxohexadeca-4,6,12,14-tetraenoyl]-L-tyrosyl-[ACP] = (3E,5S)-3-[(2E,4E,8S,10E,12Z)-1-hydroxy-4,8-dimethyltetradeca-2,4,10,12-tetraen-1-ylidene]-5-[(4-hydroxyphenyl)methyl]pyrrolidine-2,4-dione + holo-[ACP] + H(+). It participates in mycotoxin biosynthesis. Trans-enoyl reductase; part of the gene cluster that mediates the biosynthesis of ilicicolin H, a 4-hydroxy-2-pyridonealkaloid that has potent and broad antifungal activities by inhibiting the mitochondrial respiration chain. IliB collaborates with the hybrid PKS-NRPS synthetase iliA to assemble the backbone of ilicicolin H. The PKS portion of iliA and trans-acting enoyl reductase iliB work together to construct an octaketide, and two methyl groups are introduced by the MT domain of iliA during the chain assembly. The nascent chain is then condensed with tyrosine, catalyzed by the iliA C domain, and the resulting PKS-NRPS hybrid is offloaded by the iliA RED domain to form an advanced tetramic acid intermediate. The biosynthesis of ilicicolin H starts with formation of the tetramic acid by the hybrid PKS-NRPS synthetase iliA with the partnering trans-enoyl reductase iliB since iliA lacks a designated enoylreductase (ER) domain. The cytochrome P450 monooxygenase iliC then catalyzes the ring expansion of the tetramate to the acyclic 2-pyridone. The pericyclase iliD further converts the acyclic 2-pyridone into 8-epi-ilicicolin H. 8-epi-ilicicolin H might then spontaneously convert to ilicicolin H since ilicicolin H is produced in the absence of the epimerase iliE, in contrast to what was observed for the Talaromyces variabilis ilicolin H biosynthetic pathway. The chain is Trans-enoyl reductase iliB from Hypocrea jecorina (strain QM6a) (Trichoderma reesei).